We begin with the raw amino-acid sequence, 337 residues long: Holliday junction branch migration complex subunit RuvB (337 aa).

A large ATPase domain (RuvB-L) region spans residues 4 to 186; that stretch reads ADRLIAADNP…FGIVQRLEYY (183 aa). Residues Ile25, Arg26, Gly67, Lys70, Thr71, Thr72, 133 to 135, Arg176, Tyr186, and Arg223 each bind ATP; that span reads EDY. Thr71 lines the Mg(2+) pocket. The interval 187–257 is small ATPAse domain (RuvB-S); the sequence is KVEDLQHIVQ…IADKALNMLD (71 aa). Residues 260 to 337 form a head domain (RuvB-H) region; the sequence is VRGFDYMDRK…LHFGIDKPDK (78 aa). The DNA site is built by Arg296, Arg315, and Arg320.

Belongs to the RuvB family. In terms of assembly, homohexamer. Forms an RuvA(8)-RuvB(12)-Holliday junction (HJ) complex. HJ DNA is sandwiched between 2 RuvA tetramers; dsDNA enters through RuvA and exits via RuvB. An RuvB hexamer assembles on each DNA strand where it exits the tetramer. Each RuvB hexamer is contacted by two RuvA subunits (via domain III) on 2 adjacent RuvB subunits; this complex drives branch migration. In the full resolvosome a probable DNA-RuvA(4)-RuvB(12)-RuvC(2) complex forms which resolves the HJ.

Its subcellular location is the cytoplasm. The enzyme catalyses ATP + H2O = ADP + phosphate + H(+). In terms of biological role, the RuvA-RuvB-RuvC complex processes Holliday junction (HJ) DNA during genetic recombination and DNA repair, while the RuvA-RuvB complex plays an important role in the rescue of blocked DNA replication forks via replication fork reversal (RFR). RuvA specifically binds to HJ cruciform DNA, conferring on it an open structure. The RuvB hexamer acts as an ATP-dependent pump, pulling dsDNA into and through the RuvAB complex. RuvB forms 2 homohexamers on either side of HJ DNA bound by 1 or 2 RuvA tetramers; 4 subunits per hexamer contact DNA at a time. Coordinated motions by a converter formed by DNA-disengaged RuvB subunits stimulates ATP hydrolysis and nucleotide exchange. Immobilization of the converter enables RuvB to convert the ATP-contained energy into a lever motion, pulling 2 nucleotides of DNA out of the RuvA tetramer per ATP hydrolyzed, thus driving DNA branch migration. The RuvB motors rotate together with the DNA substrate, which together with the progressing nucleotide cycle form the mechanistic basis for DNA recombination by continuous HJ branch migration. Branch migration allows RuvC to scan DNA until it finds its consensus sequence, where it cleaves and resolves cruciform DNA. This chain is Holliday junction branch migration complex subunit RuvB, found in Aliivibrio fischeri (strain ATCC 700601 / ES114) (Vibrio fischeri).